Reading from the N-terminus, the 165-residue chain is Yapsin-5 (165 aa).

A signal peptide spans Met1–Ala24. An N-linked (GlcNAc...) asparagine glycan is attached at Asn57. Positions Tyr67–Tyr165 constitute a Peptidase A1 domain.

Belongs to the peptidase A1 family.

The sequence is that of Yapsin-5 (YPS5) from Saccharomyces cerevisiae (strain ATCC 204508 / S288c) (Baker's yeast).